The chain runs to 338 residues: CRISPR-associated endonuclease Cas1 (338 aa).

Positions 155, 220, and 235 each coordinate Mn(2+).

This sequence belongs to the CRISPR-associated endonuclease Cas1 family. In terms of assembly, homodimer, forms a heterotetramer with a Cas2 homodimer. Mg(2+) serves as cofactor. The cofactor is Mn(2+).

Its function is as follows. CRISPR (clustered regularly interspaced short palindromic repeat), is an adaptive immune system that provides protection against mobile genetic elements (viruses, transposable elements and conjugative plasmids). CRISPR clusters contain spacers, sequences complementary to antecedent mobile elements, and target invading nucleic acids. CRISPR clusters are transcribed and processed into CRISPR RNA (crRNA). Acts as a dsDNA endonuclease. Involved in the integration of spacer DNA into the CRISPR cassette. The type III-A Csm effector complex binds crRNA and acts as a crRNA-guided RNase, DNase and cyclic oligoadenylate synthase; binding of target RNA cognate to the crRNA is required for all activities. The chain is CRISPR-associated endonuclease Cas1 from Mycobacterium tuberculosis (strain CDC 1551 / Oshkosh).